The following is a 224-amino-acid chain: ATP-dependent Clp protease proteolytic subunit 1 (224 aa).

The active-site Nucleophile is the Ser-120. The active site involves His-145.

It belongs to the peptidase S14 family. In terms of assembly, fourteen ClpP subunits assemble into 2 heptameric rings which stack back to back to give a disk-like structure with a central cavity, resembling the structure of eukaryotic proteasomes.

The protein resides in the cytoplasm. It carries out the reaction Hydrolysis of proteins to small peptides in the presence of ATP and magnesium. alpha-casein is the usual test substrate. In the absence of ATP, only oligopeptides shorter than five residues are hydrolyzed (such as succinyl-Leu-Tyr-|-NHMec, and Leu-Tyr-Leu-|-Tyr-Trp, in which cleavage of the -Tyr-|-Leu- and -Tyr-|-Trp bonds also occurs).. Functionally, cleaves peptides in various proteins in a process that requires ATP hydrolysis. Has a chymotrypsin-like activity. Plays a major role in the degradation of misfolded proteins. This Prochlorococcus marinus (strain MIT 9313) protein is ATP-dependent Clp protease proteolytic subunit 1.